Consider the following 597-residue polypeptide: Probable bifunctional ADP-ribose hydrolase/ADP-ribosyltransferase (597 aa).

A Macro domain is found at 99–299 (SRLIKHGDLG…FYSKLLGPSH (201 aa)). D118, I119, and N133 together coordinate ADP-D-ribose. Residues C139, H144, and C146 each coordinate Zn(2+). Residues C146, I147, D148, S244, T245, G246, and F248 each coordinate ADP-D-ribose. One can recognise a Deacetylase sirtuin-type domain in the interval 307–597 (ENTPQGSLSL…IGRAIPLLLE (291 aa)). NAD(+)-binding positions include A333, 418–421 (SNAD), and Q438. Residues C446, C450, C485, and C488 each contribute to the Zn(2+) site. Residue V584 coordinates NAD(+).

It in the N-terminal section; belongs to the MacroD-type family. Zn-Macro subfamily. The protein in the C-terminal section; belongs to the sirtuin family. Class M subfamily. Monomer. Zn(2+) is required as a cofactor.

The enzyme catalyses 5-O-(ADP-D-ribosyl)-L-glutamyl-[protein] + H2O = L-glutamyl-[protein] + ADP-D-ribose + H(+). Functionally, is probably a bifunctional enzyme with ADP-ribosyltransferase and ADP-ribosylhydrolase activities. In vitro, can act as an ADP-ribosylhydrolase that hydrolyzes ADP-ribosyl-glutamate bonds. It can remove the ADP-ribosyl modification from the human mono-ADP-ribosylated PARP1 E988Q mutant, which is primarily modified on glutamate site with only minor aspartate contribution. It cannot hydrolyze the ADP-ribosyl-arpartate bond in ribosylated S.pyogenes GcvH-L. The chain is Probable bifunctional ADP-ribose hydrolase/ADP-ribosyltransferase from Fusarium oxysporum f. sp. cubense.